The sequence spans 282 residues: MGGTALNEIVKKVKIAEDVFDFWIHSPSVSKEARPGQFVVIRLHEKGERIPLTVADTKPEEGLFRMVVKVVGKTTHELSLKKEGDTILDVVGPLGNPSEIENYGNVLLVGGGVGIATLYPIAKALKEAGNNITTVLGARTKDYLIMVDEFKEISDVLLVTDDGSAGMKGVVTDAMDKLFRERKFDICWAVGPTIMMKFCTLKAREFGVPIWVSLNPIMVDGTGMCGACRVTVSGQIKFACVDGPEFRGEEVDWDELLKRLAQYREQEKISYERFLKTAGESE.

The FAD-binding FR-type domain occupies 2 to 100 (GGTALNEIVK…VGPLGNPSEI (99 aa)). Cys-225, Cys-228, and Cys-240 together coordinate [2Fe-2S] cluster.

The protein belongs to the PyrK family. [2Fe-2S] cluster is required as a cofactor. FAD serves as cofactor.

The chain is Dihydroorotate dehydrogenase B (NAD(+)), electron transfer subunit homolog from Thermotoga maritima (strain ATCC 43589 / DSM 3109 / JCM 10099 / NBRC 100826 / MSB8).